The primary structure comprises 628 residues: MBT domain-containing protein 1 (628 aa).

The interval M1–N31 is disordered. Residues P45–R80 form an FCS-type zinc finger. Zn(2+) is bound by residues C54, C57, C74, and C78. At K115 the chain carries N6-acetyllysine. MBT repeat units lie at residues F141–P245, T253–R350, F351–P456, and F464–P560. Disordered stretches follow at residues P560–M590 and N606–P628. Positions S562–S573 are enriched in low complexity. Over residues K574 to M590 the composition is skewed to basic residues. The span at Q609 to A620 shows a compositional bias: polar residues.

In terms of assembly, monomer. Component of the NuA4 histone acetyltransferase complex. Interacts with EPC1; interaction is direct and promotes recruitment of MBTD1 into the NuA4 histone acetyltransferase complex.

It localises to the nucleus. The protein localises to the chromosome. Its function is as follows. Chromatin reader component of the NuA4 histone acetyltransferase complex, a multiprotein complex involved in transcriptional activation of select genes principally by acetylation of nucleosomal histones H4 and H2A. The NuA4 complex plays a direct role in repair of DNA double-strand breaks (DSBs) by promoting homologous recombination (HR). MBTD1 specifically recognizes and binds monomethylated and dimethylated 'Lys-20' on histone H4 (H4K20me1 and H4K20me2, respectively). In the NuA4 complex, MBTD1 promotes recruitment of the complex to H4K20me marks by competing with TP53BP1 for binding to H4K20me. Following recruitment to H4K20me at DNA breaks, the NuA4 complex catalyzes acetylation of 'Lys-15' on histone H2A (H2AK15), blocking the ubiquitination mark required for TP53BP1 localization at DNA breaks, thereby promoting homologous recombination (HR). The polypeptide is MBT domain-containing protein 1 (Homo sapiens (Human)).